The chain runs to 179 residues: ATP synthase subunit b, chloroplastic (179 aa).

A helical transmembrane segment spans residues 28 to 46 (LLNILALVAILVYTGKDFL).

Belongs to the ATPase B chain family. In terms of assembly, F-type ATPases have 2 components, F(1) - the catalytic core - and F(0) - the membrane proton channel. F(1) has five subunits: alpha(3), beta(3), gamma(1), delta(1), epsilon(1). F(0) has four main subunits: a(1), b(1), b'(1) and c(10-14). The alpha and beta chains form an alternating ring which encloses part of the gamma chain. F(1) is attached to F(0) by a central stalk formed by the gamma and epsilon chains, while a peripheral stalk is formed by the delta, b and b' chains.

Its subcellular location is the plastid. It localises to the chloroplast thylakoid membrane. Its function is as follows. F(1)F(0) ATP synthase produces ATP from ADP in the presence of a proton or sodium gradient. F-type ATPases consist of two structural domains, F(1) containing the extramembraneous catalytic core and F(0) containing the membrane proton channel, linked together by a central stalk and a peripheral stalk. During catalysis, ATP synthesis in the catalytic domain of F(1) is coupled via a rotary mechanism of the central stalk subunits to proton translocation. Component of the F(0) channel, it forms part of the peripheral stalk, linking F(1) to F(0). This Thalassiosira pseudonana (Marine diatom) protein is ATP synthase subunit b, chloroplastic.